A 397-amino-acid polypeptide reads, in one-letter code: Serpin B10 (397 aa).

A disulfide bridge connects residues cysteine 68 and cysteine 395. The Nuclear localization signal signature appears at 74–77 (KKRK).

The protein belongs to the serpin family. Ov-serpin subfamily. As to expression, expressed specifically in myeloid cells and the bone marrow.

It is found in the nucleus. The protein resides in the cytoplasm. Its function is as follows. Protease inhibitor that may play a role in the regulation of protease activities during hematopoiesis and apoptosis induced by TNF. May regulate protease activities in the cytoplasm and in the nucleus. The chain is Serpin B10 (SERPINB10) from Homo sapiens (Human).